Consider the following 404-residue polypeptide: Growth/differentiation factor 6-A (404 aa).

An N-terminal signal peptide occupies residues 1–24; that stretch reads MDALRAVAFYALFVFLWSLPCCQS. Positions 25-284 are excised as a propeptide; sequence AALISQKRSK…LQFKARRRRR (260 aa). A glycan (N-linked (GlcNAc...) asparagine) is linked at asparagine 91. Residues 263–304 form a disordered region; it reads KSRGDDDEEESALQFKARRRRRTALNNRHGKRHGKKSKSRCS. Over residues 278 to 304 the composition is skewed to basic residues; the sequence is KARRRRRTALNNRHGKRHGKKSKSRCS. 3 disulfide bridges follow: cysteine 303–cysteine 369, cysteine 332–cysteine 401, and cysteine 336–cysteine 403.

Belongs to the TGF-beta family. In terms of assembly, homodimer; disulfide-linked. First expressed in late gastrula stage embryos (9.5 hours post fertilization (hpf)) in anterior neuroectoderm corresponding to the future dorsal part of the brain. Shortly after tailbud formation (11 hpf), expression expands to the entire neural region and is subsequently expressed in derivatives of the lateral neural plate and migrating neural crest cells, with the future midbrain and hindbrain showing strong expression. Also expressed weakly and transiently in the posterior embryo from 11.5 hpf to 15 hpf in the lateral mesoderm, and in ectoderm above the neural keel. At 14 hpf, expressed along the entire length of the embryo and starting around the 16-somite stage, expressed in the dorsal quadrant of the retina, representing the distal tip of the eye anlage. At this stage, also expressed in the hatching gland and the hypochord. At 24 hpf, expressed in the roof plate outlining the fourth brain ventricle, in the posterior hypochord, the primitive gut endoderm, the ventral tail mesenchyme, the dorsal part of the neural tube and the dorsal fin. Weakly expressed in the dorsal part of the posterior spinal cord and in blood cell precursors.

The protein resides in the secreted. Functionally, growth factor that controls proliferation and cellular differentiation in the retina. Plays a key role in regulating apoptosis during retinal development. Establishes dorsal-ventral positional information in the retina and controls the formation of the retinotectal map. Functions maternally in dorsal/ventral patterning to induce the expression of the zygotic bmp2b and bmp4 genes and ventralize embryos. Zygotic expression does not appear to regulate axis specification, but instead functions to establish the integrity of the axial vessels during embryonic development. May be involved in maintaining the identity of cells of the dorsal-most neural tube and of at least a subset of neural crest cells. The protein is Growth/differentiation factor 6-A (gdf6a) of Danio rerio (Zebrafish).